We begin with the raw amino-acid sequence, 1172 residues long: Putative cadmium/zinc-transporting ATPase HMA4 (1172 aa).

Topologically, residues 1–93 (MALQNKEEEK…VRVNGETSFK (93 aa)) are cytoplasmic. An HMA domain is found at 17-83 (QKSYFDVLGI…ALNEARLEAN (67 aa)). A helical membrane pass occupies residues 94–115 (NKWPSPFAVVSGLLLLLSFLKF). The Extracellular portion of the chain corresponds to 116–118 (VYS). The helical transmembrane segment at 119–138 (PLRWLAVAAVAAGIYPILAK) threads the bilayer. Topologically, residues 139-145 (AFASIKR) are cytoplasmic. Residues 146 to 166 (PRIDINILVIITVIATLAMQD) traverse the membrane as a helical segment. Phe-167 is a topological domain (extracellular). The chain crosses the membrane as a helical span at residues 168–188 (MEAAAVVFLFTISDWLETRAS). At 189–314 (YKATSVMQSL…KTKSQRLIDK (126 aa)) the chain is on the cytoplasmic side. The helical transmembrane segment at 315-337 (CSQYYTPAIILVSACVAIVPVIM) threads the bilayer. The Extracellular portion of the chain corresponds to 338–345 (KVHNLKHW). A helical transmembrane segment spans residues 346–363 (FHLALVVLVSGCPCGLIL). The Cytoplasmic portion of the chain corresponds to 364 to 656 (STPVATFCAL…KLARRARRKV (293 aa)). Catalysis depends on Asp-401, which acts as the 4-aspartylphosphate intermediate. Positions 601 and 605 each coordinate Mg(2+). A helical transmembrane segment spans residues 657 to 676 (VENVCLSIILKAGILALAFA). Topologically, residues 677-680 (GHPL) are extracellular. The chain crosses the membrane as a helical span at residues 681–700 (IWAAVLVDVGTCLLVIFNSM). Residues 701–1172 (LLLREKKKIG…HHHHHHHVSA (472 aa)) are Cytoplasmic-facing.

The protein belongs to the cation transport ATPase (P-type) (TC 3.A.3) family. Type IB subfamily.

It is found in the membrane. The catalysed reaction is Zn(2+)(in) + ATP + H2O = Zn(2+)(out) + ADP + phosphate + H(+). It carries out the reaction Cd(2+)(in) + ATP + H2O = Cd(2+)(out) + ADP + phosphate + H(+). In terms of biological role, involved in cadmium/zinc transport. The sequence is that of Putative cadmium/zinc-transporting ATPase HMA4 (HMA4) from Arabidopsis thaliana (Mouse-ear cress).